Reading from the N-terminus, the 154-residue chain is MNATILGQAIAFVIFVWFCMKYVWPPLMAAIEKRQKEISDGLASAERAKKDLDLAQANATDQLKKAKAEAQVIIEQANKRRSQILDEAKAEAEQERTKIVAQAQAEIDAERKRAREELRKQVAILAVAGAEKIIERSVDEAANSDIVDKLVAEL.

Residues 9 to 29 (AIAFVIFVWFCMKYVWPPLMA) traverse the membrane as a helical segment.

It belongs to the ATPase B chain family. In terms of assembly, F-type ATPases have 2 components, F(1) - the catalytic core - and F(0) - the membrane proton channel. F(1) has five subunits: alpha(3), beta(3), gamma(1), delta(1), epsilon(1). F(0) has three main subunits: a(1), b(2) and c(10-14). The alpha and beta chains form an alternating ring which encloses part of the gamma chain. F(1) is attached to F(0) by a central stalk formed by the gamma and epsilon chains, while a peripheral stalk is formed by the delta and b chains.

It localises to the cell inner membrane. Functionally, f(1)F(0) ATP synthase produces ATP from ADP in the presence of a proton or sodium gradient. F-type ATPases consist of two structural domains, F(1) containing the extramembraneous catalytic core and F(0) containing the membrane proton channel, linked together by a central stalk and a peripheral stalk. During catalysis, ATP synthesis in the catalytic domain of F(1) is coupled via a rotary mechanism of the central stalk subunits to proton translocation. Its function is as follows. Component of the F(0) channel, it forms part of the peripheral stalk, linking F(1) to F(0). This Klebsiella pneumoniae subsp. pneumoniae (strain ATCC 700721 / MGH 78578) protein is ATP synthase subunit b.